A 498-amino-acid polypeptide reads, in one-letter code: Probable deoxyguanosinetriphosphate triphosphohydrolase (498 aa).

Residues 71–262 (RLTHSLEVQQ…MEAADDISYC (192 aa)) form the HD domain.

It belongs to the dGTPase family. Type 1 subfamily. Requires Mg(2+) as cofactor.

It carries out the reaction dGTP + H2O = 2'-deoxyguanosine + triphosphate + H(+). DGTPase preferentially hydrolyzes dGTP over the other canonical NTPs. The sequence is that of Probable deoxyguanosinetriphosphate triphosphohydrolase from Pseudomonas aeruginosa (strain ATCC 15692 / DSM 22644 / CIP 104116 / JCM 14847 / LMG 12228 / 1C / PRS 101 / PAO1).